The primary structure comprises 105 residues: Tyrosine-protein phosphatase 12 (105 aa).

The 105-residue stretch at 1 to 105 (WRMIWEKRVE…NLRRIVRTEF (105 aa)) folds into the Tyrosine-protein phosphatase domain. Aspartate 84 is a substrate binding site.

Belongs to the protein-tyrosine phosphatase family.

The catalysed reaction is O-phospho-L-tyrosyl-[protein] + H2O = L-tyrosyl-[protein] + phosphate. The polypeptide is Tyrosine-protein phosphatase 12 (STY-12) (Styela plicata (Wrinkled sea squirt)).